We begin with the raw amino-acid sequence, 419 residues long: Metacaspase-1 (419 aa).

The interval 1 to 109 (MSGYPGYNNG…PPQGMHAFGQ (109 aa)) is disordered. Pro residues-rich tracts occupy residues 18 to 37 (QYPPQPYYPPQPAYGAPPPQ) and 45 to 61 (QPPPPQQPYGYSQPPPQ). The span at 83-95 (SVNSNAYTNGNQN) shows a compositional bias: polar residues. Active-site residues include His210 and Cys266.

It belongs to the peptidase C14B family.

In terms of biological role, involved in cell death (apoptosis). This is Metacaspase-1 (casA) from Botryotinia fuckeliana (strain B05.10) (Noble rot fungus).